A 203-amino-acid polypeptide reads, in one-letter code: Probable chemoreceptor glutamine deamidase CheD (203 aa).

The protein belongs to the CheD family.

It catalyses the reaction L-glutaminyl-[protein] + H2O = L-glutamyl-[protein] + NH4(+). In terms of biological role, probably deamidates glutamine residues to glutamate on methyl-accepting chemotaxis receptors (MCPs), playing an important role in chemotaxis. This Methylobacillus flagellatus (strain ATCC 51484 / DSM 6875 / VKM B-1610 / KT) protein is Probable chemoreceptor glutamine deamidase CheD.